The chain runs to 157 residues: Endoribonuclease YbeY (157 aa).

3 residues coordinate Zn(2+): His-114, His-118, and His-124.

This sequence belongs to the endoribonuclease YbeY family. It depends on Zn(2+) as a cofactor.

It is found in the cytoplasm. Functionally, single strand-specific metallo-endoribonuclease involved in late-stage 70S ribosome quality control and in maturation of the 3' terminus of the 16S rRNA. The polypeptide is Endoribonuclease YbeY (Salmonella typhimurium (strain LT2 / SGSC1412 / ATCC 700720)).